A 638-amino-acid polypeptide reads, in one-letter code: Acetolactate synthase 2, chloroplastic (638 aa).

Residues 1-39 constitute a chloroplast transit peptide; that stretch reads MATAATAAAALTGATTATPKSRRRAHHLATRRALAAPIR. The tract at residues 44 to 67 is disordered; the sequence is SRATPTAPPATPLRPWGPNEPRKG. Position 112 (Glu-112) interacts with thiamine diphosphate. A disulfide bridge links Cys-132 with Cys-278. FAD contacts are provided by residues Arg-214, 320-341, and 363-382; these read HGTVYANYAVDKADLLLAFGVR and DIDPAEIGKNKQPHVSICAD. The tract at residues 455–535 is thiamine pyrophosphate binding; it reads QHQMWAAQYY…VKVFVLNNQH (81 aa). Residues Asp-506 and Asn-533 each coordinate Mg(2+).

This sequence belongs to the TPP enzyme family. Requires Mg(2+) as cofactor. Thiamine diphosphate is required as a cofactor.

It is found in the plastid. Its subcellular location is the chloroplast. The catalysed reaction is 2 pyruvate + H(+) = (2S)-2-acetolactate + CO2. The protein operates within amino-acid biosynthesis; L-isoleucine biosynthesis; L-isoleucine from 2-oxobutanoate: step 1/4. It participates in amino-acid biosynthesis; L-valine biosynthesis; L-valine from pyruvate: step 1/4. The polypeptide is Acetolactate synthase 2, chloroplastic (ALS2) (Zea mays (Maize)).